Here is a 398-residue protein sequence, read N- to C-terminus: E3 ubiquitin-protein ligase MARCHF11 (398 aa).

Residues M1 to S14 are compositionally biased toward basic and acidic residues. Residues M1–Q158 are disordered. Over residues P19 to G31 the composition is skewed to pro residues. 2 stretches are compositionally biased toward basic and acidic residues: residues E94–L104 and A121–T130. The segment at Q158 to T218 adopts an RING-CH-type zinc-finger fold. Positions 166, 169, 182, 184, 192, 195, 208, and 211 each coordinate Zn(2+). Helical transmembrane passes span M241–S261 and I274–I294. The short motif at Y367–L370 is the YXXL motif element. The PDZ-binding motif lies at V395–V398.

Interacts (YXXL motif) with AP1M1. Interacts (via PDZ-binding motif) with LIN7A. Interacts with unidentified fucose glycoproteins. As to expression, predominantly expressed in testis. Present in early developing spermatids. Not present in spermatogonia, spermatocytes or somatic cells (i.e. peritubular, Leydig, and Sertoli cells). Present in early round spermatids at step 4, remains until step 11, then it decreases at steps 12-15, and diminishes after step 16 (at protein level). Also expressed at lower level in brain.

The protein resides in the cytoplasmic vesicle membrane. The catalysed reaction is S-ubiquitinyl-[E2 ubiquitin-conjugating enzyme]-L-cysteine + [acceptor protein]-L-lysine = [E2 ubiquitin-conjugating enzyme]-L-cysteine + N(6)-ubiquitinyl-[acceptor protein]-L-lysine.. It participates in protein modification; protein ubiquitination. Its function is as follows. E3 ubiquitin-protein ligase that mediates polyubiquitination of CD4. E3 ubiquitin ligases accept ubiquitin from an E2 ubiquitin-conjugating enzyme in the form of a thioester and then directly transfer the ubiquitin to targeted substrates. May play a role in ubuquitin-dependent protein sorting in developmenting spermatids. The protein is E3 ubiquitin-protein ligase MARCHF11 (Marchf11) of Rattus norvegicus (Rat).